Here is a 264-residue protein sequence, read N- to C-terminus: Thiazole synthase (264 aa).

Lys-106 functions as the Schiff-base intermediate with DXP in the catalytic mechanism. 1-deoxy-D-xylulose 5-phosphate contacts are provided by residues Gly-167, 193-194 (AG), and 215-216 (NS).

Belongs to the ThiG family. As to quaternary structure, homotetramer. Forms heterodimers with either ThiH or ThiS.

The protein resides in the cytoplasm. The catalysed reaction is [ThiS sulfur-carrier protein]-C-terminal-Gly-aminoethanethioate + 2-iminoacetate + 1-deoxy-D-xylulose 5-phosphate = [ThiS sulfur-carrier protein]-C-terminal Gly-Gly + 2-[(2R,5Z)-2-carboxy-4-methylthiazol-5(2H)-ylidene]ethyl phosphate + 2 H2O + H(+). Its pathway is cofactor biosynthesis; thiamine diphosphate biosynthesis. In terms of biological role, catalyzes the rearrangement of 1-deoxy-D-xylulose 5-phosphate (DXP) to produce the thiazole phosphate moiety of thiamine. Sulfur is provided by the thiocarboxylate moiety of the carrier protein ThiS. In vitro, sulfur can be provided by H(2)S. This is Thiazole synthase from Ectopseudomonas mendocina (strain ymp) (Pseudomonas mendocina).